The sequence spans 542 residues: Aminotriazole resistance protein (542 aa).

Over 1 to 108 (MGNQSLVVLT…SFGSEGNSKS (108 aa)) the chain is Cytoplasmic. The chain crosses the membrane as a helical span at residues 109–129 (WLMASFPLVSGSFILISGRLG). Residues 130 to 136 (DIYGLKK) are Extracellular-facing. Residues 137-157 (MLLVGYVLVIIWSLICGITKY) traverse the membrane as a helical segment. The Cytoplasmic segment spans residues 158–172 (SGSDTFFIISRAFQG). Residues 173–193 (LGIAFVLPNVLGIIGNIYVGG) traverse the membrane as a helical segment. The Extracellular portion of the chain corresponds to 194-198 (TFRKN). A helical transmembrane segment spans residues 199-219 (IVISFVGAMAPIGATLGCLFA). Over 220–231 (GLIGTEDPKQWP) the chain is Cytoplasmic. A helical membrane pass occupies residues 232 to 252 (WAFYAYSIAAFINFVLSIYAI). Residues 253–262 (PSTIPTNIHH) are Extracellular-facing. The chain crosses the membrane as a helical span at residues 263-283 (FSMDWIGSVLGVIGLILLNFV). Residues 284–295 (WNQAPISGWNQA) lie on the Cytoplasmic side of the membrane. A helical transmembrane segment spans residues 296-316 (YIIVILIISVIFLVVFIIYEI). At 317–333 (RFAKTPLLPRAVIKDRH) the chain is on the extracellular side. The helical transmembrane segment at 334–354 (MIQIMLALFFGWGSFGIFTFY) threads the bilayer. The Cytoplasmic portion of the chain corresponds to 355 to 371 (YFQFQLNIRQYTALWAG). A helical membrane pass occupies residues 372-392 (GTYFMFLIWGIIAALLVGFTI). Residues 393-399 (KNVSPSV) lie on the Extracellular side of the membrane. The chain crosses the membrane as a helical span at residues 400–420 (FLFFSMVAFNVGSIMASVTPV). The Cytoplasmic segment spans residues 421-429 (HETYFRTQL). The chain crosses the membrane as a helical span at residues 430 to 450 (GTMIILSFGMDLSFPASSIIF). Topologically, residues 451–505 (SDNLPMEYQGMAGSLVNTVVNYSMSLCLGMGATVETQVNSDGKHLLKGYRGAQYL) are extracellular. Residue N471 is glycosylated (N-linked (GlcNAc...) asparagine). Residues 506–526 (GIGLASLACMISGLYMVESFI) traverse the membrane as a helical segment. The Cytoplasmic portion of the chain corresponds to 527 to 542 (KGRRARAAAEYDCTVA).

The protein belongs to the major facilitator superfamily.

It is found in the membrane. Putative component of the machinery responsible for pumping aminotriazole (and possibly other toxic compounds) out of the cell. Probable ATP-dependent export permease. Appears to confer resistance only to aminotriazole. The sequence is that of Aminotriazole resistance protein (ATR1) from Saccharomyces cerevisiae (strain ATCC 204508 / S288c) (Baker's yeast).